The chain runs to 322 residues: 4-hydroxythreonine-4-phosphate dehydrogenase (322 aa).

T132 is a binding site for substrate. Residues H160, H205, and H260 each coordinate a divalent metal cation. Substrate is bound by residues K268, N277, and R286.

Belongs to the PdxA family. As to quaternary structure, homodimer. Requires Zn(2+) as cofactor. The cofactor is Mg(2+). Co(2+) serves as cofactor.

Its subcellular location is the cytoplasm. The enzyme catalyses 4-(phosphooxy)-L-threonine + NAD(+) = 3-amino-2-oxopropyl phosphate + CO2 + NADH. It functions in the pathway cofactor biosynthesis; pyridoxine 5'-phosphate biosynthesis; pyridoxine 5'-phosphate from D-erythrose 4-phosphate: step 4/5. In terms of biological role, catalyzes the NAD(P)-dependent oxidation of 4-(phosphooxy)-L-threonine (HTP) into 2-amino-3-oxo-4-(phosphooxy)butyric acid which spontaneously decarboxylates to form 3-amino-2-oxopropyl phosphate (AHAP). The polypeptide is 4-hydroxythreonine-4-phosphate dehydrogenase (Xanthomonas oryzae pv. oryzae (strain PXO99A)).